Consider the following 330-residue polypeptide: Aspartate--ammonia ligase (330 aa).

The protein belongs to the class-II aminoacyl-tRNA synthetase family. AsnA subfamily.

It localises to the cytoplasm. It carries out the reaction L-aspartate + NH4(+) + ATP = L-asparagine + AMP + diphosphate + H(+). It participates in amino-acid biosynthesis; L-asparagine biosynthesis; L-asparagine from L-aspartate (ammonia route): step 1/1. This chain is Aspartate--ammonia ligase, found in Shigella flexneri serotype 5b (strain 8401).